The following is a 135-amino-acid chain: Large ribosomal subunit protein uL22c (135 aa).

It belongs to the universal ribosomal protein uL22 family. Part of the 50S ribosomal subunit.

Its subcellular location is the plastid. In terms of biological role, this protein binds specifically to 23S rRNA. The globular domain of the protein is located near the polypeptide exit tunnel on the outside of the subunit, while an extended beta-hairpin is found that lines the wall of the exit tunnel in the center of the 70S ribosome. This is Large ribosomal subunit protein uL22c (rpl22) from Cuscuta exaltata (Tall dodder).